Here is a 147-residue protein sequence, read N- to C-terminus: Small ribosomal subunit protein bS16 (147 aa).

Positions 81 to 147 are disordered; that stretch reads QKFTGDTSPS…GDNSGEKAEA (67 aa). 2 stretches are compositionally biased toward basic and acidic residues: residues 95-104 and 114-125; these read QPERPNKDDL and EAPREAITKKSE. Low complexity predominate over residues 126 to 140; the sequence is GAAADEASESAAGDN.

Belongs to the bacterial ribosomal protein bS16 family.

The protein is Small ribosomal subunit protein bS16 of Cutibacterium acnes (strain DSM 16379 / KPA171202) (Propionibacterium acnes).